The following is a 458-amino-acid chain: GTPase Der (458 aa).

EngA-type G domains follow at residues 4 to 169 and 178 to 353; these read PSIA…PKDL and IMMS…TQHR. Residues 10–17, 57–61, 120–123, 184–191, 231–235, and 296–299 each bind GTP; these read GRPNVGKS, DTGGL, NKCE, DTAGI, and NKWD. One can recognise a KH-like domain in the interval 354–439; sequence RRVTTSVVNE…PIILLWRGKQ (86 aa).

The protein belongs to the TRAFAC class TrmE-Era-EngA-EngB-Septin-like GTPase superfamily. EngA (Der) GTPase family. Associates with the 50S ribosomal subunit.

GTPase that plays an essential role in the late steps of ribosome biogenesis. The chain is GTPase Der from Prochlorococcus marinus subsp. pastoris (strain CCMP1986 / NIES-2087 / MED4).